We begin with the raw amino-acid sequence, 432 residues long: Beta-fructosidase (432 aa).

Residues W14–D17, Q33, W41, F74–S75, Y92, R137–D138, E188–E190, T208, and W260 contribute to the substrate site. The active site involves D17.

This sequence belongs to the glycosyl hydrolase 32 family.

It catalyses the reaction Hydrolysis of terminal non-reducing beta-D-fructofuranoside residues in beta-D-fructofuranosides.. Its function is as follows. Hydrolysis of sucrose, raffinose, inulin and levan. Specific for the fructose moiety and the beta-anomeric configuration of the glycosidic linkages of its substrates. The enzyme released fructose from sucrose and raffinose, and the fructose polymer inulin is hydrolyzed quantitatively in an exo-type fashion. The chain is Beta-fructosidase (bfrA) from Thermotoga maritima (strain ATCC 43589 / DSM 3109 / JCM 10099 / NBRC 100826 / MSB8).